Here is a 359-residue protein sequence, read N- to C-terminus: Uroporphyrinogen decarboxylase (359 aa).

Arg28, Ala30, Arg32, Asp79, Tyr157, Ser212, and His335 together coordinate coproporphyrinogen III.

The protein belongs to the uroporphyrinogen decarboxylase family. As to quaternary structure, monomer.

It is found in the nucleus. Its subcellular location is the cytoplasm. The catalysed reaction is uroporphyrinogen III + 4 H(+) = coproporphyrinogen III + 4 CO2. It carries out the reaction uroporphyrinogen I + 4 H(+) = coproporphyrinogen I + 4 CO2. It participates in porphyrin-containing compound metabolism; protoporphyrin-IX biosynthesis; coproporphyrinogen-III from 5-aminolevulinate: step 4/4. Functionally, catalyzes the sequential decarboxylation of four acetate groups of uroporphyrinogen-III (octacarboxyporphyrin) to yield coproporphyrinogen-III (tetracarboxyporphyrin) with the formation of intermediate hepta-, hexa- and penta-carboxylate porphyrinogens in the heme biosynthesis pathway. Acts on a number of porphyrinogens, but only coproporphyrinogen III can ultimately be converted to heme. This chain is Uroporphyrinogen decarboxylase (hem12), found in Schizosaccharomyces pombe (strain 972 / ATCC 24843) (Fission yeast).